A 94-amino-acid chain; its full sequence is Co-chaperonin GroES (94 aa).

The protein belongs to the GroES chaperonin family. Heptamer of 7 subunits arranged in a ring. Interacts with the chaperonin GroEL.

It is found in the cytoplasm. In terms of biological role, together with the chaperonin GroEL, plays an essential role in assisting protein folding. The GroEL-GroES system forms a nano-cage that allows encapsulation of the non-native substrate proteins and provides a physical environment optimized to promote and accelerate protein folding. GroES binds to the apical surface of the GroEL ring, thereby capping the opening of the GroEL channel. The polypeptide is Co-chaperonin GroES (Alkaliphilus oremlandii (strain OhILAs) (Clostridium oremlandii (strain OhILAs))).